Here is a 185-residue protein sequence, read N- to C-terminus: MSKSASRARLLEIIRRRSFGRGEVTLASGRKSDFYFNLKPTMMDPEGATLLAELTYEALKDDGYDYIGGLEMGAVPLAGAIAQISWIKGHPIAAFFVRKKPKEHGARLAIEGLTRDETLAGKRIVVVEDVTTTGGSAMKAVETLREAGAEVSLVFTMVDREEGAAEAFAAAGLSFRALYKAREFL.

5-phospho-alpha-D-ribose 1-diphosphate contacts are provided by residues arginine 98, lysine 99, lysine 102, histidine 104, and 128-136 (EDVTTTGGS). Residues threonine 132 and arginine 160 each coordinate orotate.

This sequence belongs to the purine/pyrimidine phosphoribosyltransferase family. PyrE subfamily. In terms of assembly, homodimer. It depends on Mg(2+) as a cofactor.

The enzyme catalyses orotidine 5'-phosphate + diphosphate = orotate + 5-phospho-alpha-D-ribose 1-diphosphate. Its pathway is pyrimidine metabolism; UMP biosynthesis via de novo pathway; UMP from orotate: step 1/2. In terms of biological role, catalyzes the transfer of a ribosyl phosphate group from 5-phosphoribose 1-diphosphate to orotate, leading to the formation of orotidine monophosphate (OMP). The sequence is that of Orotate phosphoribosyltransferase from Bradyrhizobium sp. (strain ORS 278).